Reading from the N-terminus, the 212-residue chain is Large ribosomal subunit protein uL3 (212 aa).

At Gln-153 the chain carries N5-methylglutamine.

It belongs to the universal ribosomal protein uL3 family. As to quaternary structure, part of the 50S ribosomal subunit. Forms a cluster with proteins L14 and L19. In terms of processing, methylated by PrmB.

Its function is as follows. One of the primary rRNA binding proteins, it binds directly near the 3'-end of the 23S rRNA, where it nucleates assembly of the 50S subunit. In Shewanella sediminis (strain HAW-EB3), this protein is Large ribosomal subunit protein uL3.